A 324-amino-acid chain; its full sequence is Anthranilate phosphoribosyltransferase (324 aa).

Residues G72, 75–76, T80, 82–85, 99–107, and S111 contribute to the 5-phospho-alpha-D-ribose 1-diphosphate site; these read GD, NVST, and KHGNVSVTS. An anthranilate-binding site is contributed by G72. Mg(2+) is bound at residue S84. Anthranilate is bound at residue N102. Anthranilate is bound at residue R157. Mg(2+)-binding residues include D215 and E216.

Belongs to the anthranilate phosphoribosyltransferase family. Homodimer. Mg(2+) is required as a cofactor.

It catalyses the reaction N-(5-phospho-beta-D-ribosyl)anthranilate + diphosphate = 5-phospho-alpha-D-ribose 1-diphosphate + anthranilate. It participates in amino-acid biosynthesis; L-tryptophan biosynthesis; L-tryptophan from chorismate: step 2/5. Its function is as follows. Catalyzes the transfer of the phosphoribosyl group of 5-phosphorylribose-1-pyrophosphate (PRPP) to anthranilate to yield N-(5'-phosphoribosyl)-anthranilate (PRA). The sequence is that of Anthranilate phosphoribosyltransferase from Pyrococcus furiosus (strain ATCC 43587 / DSM 3638 / JCM 8422 / Vc1).